The primary structure comprises 591 residues: Potassium-transporting ATPase potassium-binding subunit (591 aa).

Helical transmembrane passes span 6–26 (WFQI…LGVF), 63–83 (WTEY…MLYI), 137–157 (GLAY…IAFI), 179–199 (VLWV…SQGV), 272–292 (LSNL…TYTL), 303–323 (WAVW…VYWA), 405–425 (AGMY…GLMV), 444–464 (AMLV…ISSV), 510–530 (VAIG…MLAI), and 553–573 (LFSV…FFPA).

Belongs to the KdpA family. As to quaternary structure, the system is composed of three essential subunits: KdpA, KdpB and KdpC.

The protein localises to the cell inner membrane. Functionally, part of the high-affinity ATP-driven potassium transport (or Kdp) system, which catalyzes the hydrolysis of ATP coupled with the electrogenic transport of potassium into the cytoplasm. This subunit binds the periplasmic potassium ions and delivers the ions to the membrane domain of KdpB through an intramembrane tunnel. This chain is Potassium-transporting ATPase potassium-binding subunit, found in Koribacter versatilis (strain Ellin345).